A 432-amino-acid chain; its full sequence is Glutamate-1-semialdehyde 2,1-aminomutase (432 aa).

An N6-(pyridoxal phosphate)lysine modification is found at lysine 267.

The protein belongs to the class-III pyridoxal-phosphate-dependent aminotransferase family. HemL subfamily. Homodimer. Pyridoxal 5'-phosphate is required as a cofactor.

It localises to the cytoplasm. The catalysed reaction is (S)-4-amino-5-oxopentanoate = 5-aminolevulinate. The protein operates within porphyrin-containing compound metabolism; protoporphyrin-IX biosynthesis; 5-aminolevulinate from L-glutamyl-tRNA(Glu): step 2/2. The chain is Glutamate-1-semialdehyde 2,1-aminomutase from Rhodococcus erythropolis (strain PR4 / NBRC 100887).